An 874-amino-acid polypeptide reads, in one-letter code: Alanine--tRNA ligase (874 aa).

Positions 564, 568, 665, and 669 each coordinate Zn(2+).

The protein belongs to the class-II aminoacyl-tRNA synthetase family. It depends on Zn(2+) as a cofactor.

The protein resides in the cytoplasm. It carries out the reaction tRNA(Ala) + L-alanine + ATP = L-alanyl-tRNA(Ala) + AMP + diphosphate. Its function is as follows. Catalyzes the attachment of alanine to tRNA(Ala) in a two-step reaction: alanine is first activated by ATP to form Ala-AMP and then transferred to the acceptor end of tRNA(Ala). Also edits incorrectly charged Ser-tRNA(Ala) and Gly-tRNA(Ala) via its editing domain. The polypeptide is Alanine--tRNA ligase (Burkholderia pseudomallei (strain 668)).